A 273-amino-acid chain; its full sequence is Ribosomal protein L11 methyltransferase (273 aa).

Residues threonine 112, glycine 133, aspartate 155, and asparagine 203 each coordinate S-adenosyl-L-methionine.

It belongs to the methyltransferase superfamily. PrmA family.

It localises to the cytoplasm. It catalyses the reaction L-lysyl-[protein] + 3 S-adenosyl-L-methionine = N(6),N(6),N(6)-trimethyl-L-lysyl-[protein] + 3 S-adenosyl-L-homocysteine + 3 H(+). In terms of biological role, methylates ribosomal protein L11. The sequence is that of Ribosomal protein L11 methyltransferase from Deinococcus radiodurans (strain ATCC 13939 / DSM 20539 / JCM 16871 / CCUG 27074 / LMG 4051 / NBRC 15346 / NCIMB 9279 / VKM B-1422 / R1).